The primary structure comprises 228 residues: Cytidylate kinase (228 aa).

7–15 (GPVATGKST) serves as a coordination point for ATP.

This sequence belongs to the cytidylate kinase family. Type 1 subfamily.

It is found in the cytoplasm. The catalysed reaction is CMP + ATP = CDP + ADP. It catalyses the reaction dCMP + ATP = dCDP + ADP. This Protochlamydia amoebophila (strain UWE25) protein is Cytidylate kinase.